The sequence spans 157 residues: MSYNITNSNQYQYFAAVWAEPTPMLNQCVSALSQSYQTQAGRDTVRQQFANLLSTIVAPNQRFPDTGFRVYVNSAVIKPLYEALMKSFDTRNRIIETEEESRPSASEVANATQRVDDATVAIRSQIQLLLNELSNGHGYMNRAEFEAILPWTTAPAT.

Position 2 is an N-acetylserine; by host (Ser2).

It belongs to the virgaviridae capsid protein family.

Its subcellular location is the virion. Its function is as follows. Capsid protein self-assembles to form rod-shaped virions about 18 nm in diameter with a central canal enclosing the viral genomic RNA. This Digitalis lanata (Grecian foxglove) protein is Capsid protein (CP).